Consider the following 122-residue polypeptide: Secreted RxLR effector protein RXLR-C251 (122 aa).

Positions 1–24 are cleaved as a signal peptide; sequence MRFFYKLALMTTVASLACSDTALA. Residues 48–51 carry the RxLR motif; the sequence is RSLR.

This sequence belongs to the RxLR effector family.

It is found in the secreted. The protein localises to the host cytoplasm. The protein resides in the host nucleus. In terms of biological role, secreted effector that does not suppress pattern-triggered immunity (PTI) in plant host. The protein is Secreted RxLR effector protein RXLR-C251 of Plasmopara halstedii (Downy mildew of sunflower).